We begin with the raw amino-acid sequence, 302 residues long: G-protein coupled receptor A5 (302 aa).

The Extracellular segment spans residues 1–20 (MADSSNSSLNCTAIHDQTVL). Residues 21-41 (ILGQVFNSVWLFISVIFLYIF) traverse the membrane as a helical segment. Over 42–50 (ACKLCFRPR) the chain is Cytoplasmic. Residues 51–71 (IYLWLSFYTLGFMLWVLCKVL) traverse the membrane as a helical segment. At 72–81 (QEYVTGKFKC) the chain is on the extracellular side. Residues 82-102 (VITNCIGDFCLVFLSCIMLGI) form a helical membrane-spanning segment. At 103 to 122 (MLDRYLKIQGTLRGGMKDIH) the chain is on the cytoplasmic side. The chain crosses the membrane as a helical span at residues 123–143 (IGIFVSASCFGSLMIALLDGL). Over 144–173 (HMGDSEKLQFNGTESFKCLPATSVSSYKAQ) the chain is Extracellular. The chain crosses the membrane as a helical span at residues 174–194 (LMFKSIFCIICIIMCLILTCL). The Cytoplasmic portion of the chain corresponds to 195-208 (TAKKVLGTRLRKKY). A helical transmembrane segment spans residues 209–229 (VIVGNVGLLSFVNILLWVMIA). Topologically, residues 230–249 (CGLLKQALESNLSLCPTKQS) are extracellular. The chain crosses the membrane as a helical span at residues 250–270 (TYIYPYTMPVTVIFVLVIYLF). At 271–302 (SSTHMKNAMRKSGQIRHSLSSPNQVQSSFRLV) the chain is on the cytoplasmic side.

This sequence belongs to the G-protein coupled receptor 1 family.

The protein resides in the host cell membrane. Its subcellular location is the host endoplasmic reticulum membrane. Acts as a viral G-protein coupled receptor that constitutively activates host alphai-type G-proteins, thereby inhibiting host forskolin-triggered CREB activation. In Connochaetes taurinus (Blue wildebeest), this protein is G-protein coupled receptor A5 (A5).